The chain runs to 104 residues: Large ribosomal subunit protein bL21 (104 aa).

It belongs to the bacterial ribosomal protein bL21 family. As to quaternary structure, part of the 50S ribosomal subunit. Contacts protein L20.

In terms of biological role, this protein binds to 23S rRNA in the presence of protein L20. The protein is Large ribosomal subunit protein bL21 of Nitrosococcus oceani (strain ATCC 19707 / BCRC 17464 / JCM 30415 / NCIMB 11848 / C-107).